The chain runs to 148 residues: Ribonuclease H (148 aa).

One can recognise an RNase H type-1 domain in the interval 3–144; sequence AEETVEIFTD…ADALANRGIE (142 aa). The Mg(2+) site is built by D12, E50, D72, and D136. Residues 129 to 148 are disordered; that stretch reads HPENERADALANRGIEELKG.

This sequence belongs to the RNase H family. As to quaternary structure, monomer. It depends on Mg(2+) as a cofactor.

It localises to the cytoplasm. The catalysed reaction is Endonucleolytic cleavage to 5'-phosphomonoester.. Functionally, endonuclease that specifically degrades the RNA of RNA-DNA hybrids. This Dechloromonas aromatica (strain RCB) protein is Ribonuclease H.